Reading from the N-terminus, the 280-residue chain is Divalent cation/proton antiporter GDT1 (280 aa).

Residues 1–3 (MGN) are Cytoplasmic-facing. The helical transmembrane segment at 4–24 (MIKKASLIALLPLFTAAAAAA) threads the bilayer. The Vacuolar segment spans residues 25–45 (TDAETSMESGSSSHLKSFLMS). The chain crosses the membrane as a helical span at residues 46-66 (VSMIGLSEIGDKTFLIAALMA). The Cytoplasmic segment spans residues 67–71 (MRHKR). A helical transmembrane segment spans residues 72 to 92 (VLVFSAAATSLAIMTILSGVV). Over 93–104 (GHSAVAFLSERY) the chain is Vacuolar. The helical transmembrane segment at 105 to 125 (TAFFAGILFLVFGYKLTMEGL) threads the bilayer. At 126–183 (EMSKDAGVEEEMAEVEEEIAIKDMNQDMDDVEKGGDTAYDKQLKNASIGKKIVHRIRE) the chain is on the cytoplasmic side. A helical membrane pass occupies residues 184 to 204 (LASFMFSPVWVQIFLMVFLGE). The Vacuolar segment spans residues 205 to 222 (LGDRSQISIIAMATDSDY). A helical transmembrane segment spans residues 223-243 (WYVIAGAVIGHAICSGLAVVG). Topologically, residues 244–255 (GKLLATRISIRT) are cytoplasmic. The chain crosses the membrane as a helical span at residues 256–276 (ITLASSLLFFIFALMYIYQAF). Residues 277–280 (TTQD) are Vacuolar-facing.

This sequence belongs to the GDT1 family.

The protein resides in the golgi apparatus. Its subcellular location is the cis-Golgi network membrane. The catalysed reaction is Ca(2+)(in) + n H(+)(out) = Ca(2+)(out) + n H(+)(in). It carries out the reaction Mn(2+)(in) + n H(+)(out) = Mn(2+)(out) + n H(+)(in). Its function is as follows. Divalent cation:proton antiporter that exchanges calcium or manganese ions for protons across the Golgi membrane. Mediates the reversible transport of calcium or manganese to the Golgi lumen driven by the proton gradient and possibly the membrane potential generated by V-ATPase. Provides calcium or manganese cofactors to resident Golgi enzymes and contributes to the maintenance of an acidic luminal Golgi pH required for proper functioning of the secretory pathway. The transport stoichiometry remains to be elucidated. This chain is Divalent cation/proton antiporter GDT1, found in Saccharomyces cerevisiae (strain ATCC 204508 / S288c) (Baker's yeast).